Reading from the N-terminus, the 155-residue chain is Small ribosomal subunit protein uS7c (155 aa).

It belongs to the universal ribosomal protein uS7 family. As to quaternary structure, part of the 30S ribosomal subunit.

It localises to the plastid. The protein localises to the chloroplast. One of the primary rRNA binding proteins, it binds directly to 16S rRNA where it nucleates assembly of the head domain of the 30S subunit. In Hydrastis canadensis (Goldenseal), this protein is Small ribosomal subunit protein uS7c (rps7).